The primary structure comprises 338 residues: Anthocyanidin reductase ((2S)-flavan-3-ol-forming) (338 aa).

Residues 18-21 (TGFV), K48, 87-90 (VATP), and Y168 each bind NADP(+).

The protein belongs to the NAD(P)-dependent epimerase/dehydratase family. Dihydroflavonol-4-reductase subfamily. In terms of tissue distribution, expressed in leaves and grape berries.

It catalyses the reaction a (2S,3R)-flavan-3-ol + 2 NADP(+) = an anthocyanidin with a 3-hydroxy group + 2 NADPH + 2 H(+). The enzyme catalyses a (2S,3S)-flavan-3-ol + 2 NADP(+) = an anthocyanidin with a 3-hydroxy group + 2 NADPH + 2 H(+). The protein operates within secondary metabolite biosynthesis; flavonoid biosynthesis. Its function is as follows. Produces the terminal flavan-3-ol monomers required for the formation of proanthocyanidins or condensed tannins in leaves and flowers, as well as in the skin and seeds of developing berries. Behaves as a reductase and as a C-3 epimerase. Catalyzes the double reduction of anthocyanidins, producing a mixture of (2S,3S)- and (2S,3R)-flavan-3-ols. The enzyme catalyzes sequential hydride transfers to C-2 and C-4, respectively and epimerization at C-3 is achieved by tautomerization that occurs between the two hydride transfers. Converts cyanidin, pelargonidin and delphinidin into catechin and epicatechin, afzelechin and epiafzelechin, and gallocatechin and epigallocatechin respectively. This Vitis vinifera (Grape) protein is Anthocyanidin reductase ((2S)-flavan-3-ol-forming).